The following is a 162-amino-acid chain: NADH-ubiquinone oxidoreductase subunit 8 (162 aa).

4Fe-4S ferredoxin-type domains lie at 54 to 83 (RRYQTGEERCIACKLCEAICPAQAITIESE) and 93 to 122 (TRYDIDMTKCIYCGFCQEACPVDAIVEGPN). [4Fe-4S] cluster-binding residues include cysteine 63, cysteine 66, cysteine 69, cysteine 73, cysteine 102, cysteine 105, cysteine 108, and cysteine 112.

The protein belongs to the complex I 23 kDa subunit family. [4Fe-4S] cluster serves as cofactor.

Its subcellular location is the mitochondrion. The enzyme catalyses a ubiquinone + NADH + 5 H(+)(in) = a ubiquinol + NAD(+) + 4 H(+)(out). Functionally, core subunit of the mitochondrial membrane respiratory chain NADH dehydrogenase (Complex I) that is believed to belong to the minimal assembly required for catalysis. Complex I functions in the transfer of electrons from NADH to the respiratory chain. The immediate electron acceptor for the enzyme is believed to be ubiquinone. May donate electrons to ubiquinone. The sequence is that of NADH-ubiquinone oxidoreductase subunit 8 (NAD8) from Reclinomonas americana.